We begin with the raw amino-acid sequence, 578 residues long: G protein-coupled receptor kinase 4 (578 aa).

At M1 the chain carries N-acetylmethionine. Residues 1–154 form an N-terminal region; the sequence is MELENIVANS…ECTRVAHNYL (154 aa). In terms of domain architecture, RGS spans 52–172; it reads DYSSLCDKQP…QESSYFSQFL (121 aa). The Protein kinase domain occupies 187–449; that stretch reads FRHYRVLGKG…AAGVKQHPVF (263 aa). ATP is bound by residues 193–201 and K216; that span reads LGKGGFGEV. The active-site Proton acceptor is D312. Positions 450–515 constitute an AGC-kinase C-terminal domain; sequence KDINFRRLEA…GCVSIPWQNE (66 aa). Phosphoserine is present on S485.

Belongs to the protein kinase superfamily. AGC Ser/Thr protein kinase family. GPRK subfamily. Interacts with DRD3. In terms of processing, palmitoylated. As to expression, isoform 1, isoform 2, isoform 3, and isoform 4 are expressed in testis. Isoform 4 is expressed in myometrium.

The protein resides in the cytoplasm. It is found in the cell cortex. The catalysed reaction is [G-protein-coupled receptor] + ATP = [G-protein-coupled receptor]-phosphate + ADP + H(+). Inhibited by heparin. In terms of biological role, specifically phosphorylates the activated forms of G protein-coupled receptors. GRK4-alpha can phosphorylate rhodopsin and its activity is inhibited by calmodulin; the other three isoforms do not phosphorylate rhodopsin and do not interact with calmodulin. GRK4-alpha and GRK4-gamma phosphorylate DRD3. Phosphorylates ADRB2. This chain is G protein-coupled receptor kinase 4 (GRK4), found in Homo sapiens (Human).